Here is a 310-residue protein sequence, read N- to C-terminus: Ribosomal RNA large subunit methyltransferase F (310 aa).

It belongs to the methyltransferase superfamily. METTL16/RlmF family.

The protein localises to the cytoplasm. It catalyses the reaction adenosine(1618) in 23S rRNA + S-adenosyl-L-methionine = N(6)-methyladenosine(1618) in 23S rRNA + S-adenosyl-L-homocysteine + H(+). In terms of biological role, specifically methylates the adenine in position 1618 of 23S rRNA. The protein is Ribosomal RNA large subunit methyltransferase F of Pseudoalteromonas translucida (strain TAC 125).